The following is an 84-amino-acid chain: Small ribosomal subunit protein uS17 (84 aa).

Belongs to the universal ribosomal protein uS17 family. Part of the 30S ribosomal subunit.

One of the primary rRNA binding proteins, it binds specifically to the 5'-end of 16S ribosomal RNA. In Blochmanniella pennsylvanica (strain BPEN), this protein is Small ribosomal subunit protein uS17.